A 131-amino-acid polypeptide reads, in one-letter code: Sec-independent protein translocase protein TatB (131 aa).

A helical membrane pass occupies residues 2-22; sequence FANIGWGEMLVLVMVGLVVLG. Positions 90 to 131 are disordered; it reads DSLFTGDFDRPTPKKPDAAGSAGPDATEQIGAGPIPFDSDAT. Residues 96–106 are compositionally biased toward basic and acidic residues; that stretch reads DFDRPTPKKPD.

It belongs to the TatB family. The Tat system comprises two distinct complexes: a TatABC complex, containing multiple copies of TatA, TatB and TatC subunits, and a separate TatA complex, containing only TatA subunits. Substrates initially bind to the TatABC complex, which probably triggers association of the separate TatA complex to form the active translocon.

It localises to the cell membrane. Functionally, part of the twin-arginine translocation (Tat) system that transports large folded proteins containing a characteristic twin-arginine motif in their signal peptide across membranes. Together with TatC, TatB is part of a receptor directly interacting with Tat signal peptides. TatB may form an oligomeric binding site that transiently accommodates folded Tat precursor proteins before their translocation. The chain is Sec-independent protein translocase protein TatB from Mycobacterium bovis (strain ATCC BAA-935 / AF2122/97).